The sequence spans 197 residues: Potassium-transporting ATPase KdpC subunit (197 aa).

The helical transmembrane segment at 7 to 27 threads the bilayer; it reads PALVSMGLFTVLLGLAYPLAV.

Belongs to the KdpC family. The system is composed of three essential subunits: KdpA, KdpB and KdpC.

Its subcellular location is the cell inner membrane. Its function is as follows. Part of the high-affinity ATP-driven potassium transport (or Kdp) system, which catalyzes the hydrolysis of ATP coupled with the electrogenic transport of potassium into the cytoplasm. This subunit acts as a catalytic chaperone that increases the ATP-binding affinity of the ATP-hydrolyzing subunit KdpB by the formation of a transient KdpB/KdpC/ATP ternary complex. This Caulobacter vibrioides (strain ATCC 19089 / CIP 103742 / CB 15) (Caulobacter crescentus) protein is Potassium-transporting ATPase KdpC subunit.